The sequence spans 441 residues: BTB/POZ domain-containing protein At2g24240 (441 aa).

The BTB domain occupies 6–76 (DRIKFNVGGR…LRTGDLNVPA (71 aa)).

The protein operates within protein modification; protein ubiquitination. Its function is as follows. May act as a substrate-specific adapter of an E3 ubiquitin-protein ligase complex (CUL3-RBX1-BTB) which mediates the ubiquitination and subsequent proteasomal degradation of target proteins. The protein is BTB/POZ domain-containing protein At2g24240 of Arabidopsis thaliana (Mouse-ear cress).